Reading from the N-terminus, the 674-residue chain is MPRFRDLSHNCRPSEAPRVMEPKNRDRTVDPAVLEMLVKSKDDKVITAFDRFVAQQPQCKIGYEGICCRFCMAGPCRIKATDGPGSRGICGASAWTIVARNVGLMILTGAAAHCEHGNHIAHALVEMAEGKAPDYSVKDEAKLKEVCRRVGIEVEGKSVLELAQEVGEKALEDFRRLKGEGEATWLMTTINEGRKEKFRTHNVVPFGIHASISELVNQAHMGMDNDPVNLVFSAIRVALADYTGEHIATDFSDILFGTPQPVVSEANMGVLDPDQVNFVLHGHNPLLSEIIVQAAREMEGEAKAAGAKGINLVGICCTGNEVLMRQGIPLVTSFASQELAICTGAIDAMCVDVQCIMPSISAVAECYHTRIITTADNAKIPGAYHIDYQTATAIESAKTAIRMAIEAFKERKESNRPVYIPQIKNRVVAGWSLEALTKLLATQNAQNPIRVLNQAILDGELAGVALICGCNNLKGFQDNSHLTVMKELLKNNVFVVATGCSAQAAGKLGLLDPANVETYCGDGLKGFLKRLGEGANIEIGLPPVFHMGSCVDNSRAVDLLMAMANDLGVDTPKVPFVASAPEAMSGKAAAIGTWWVSLGVPTHVGTMPPVEGSDLIYSILTQIASDVYGGYFIFEMDPQVAARKILDALEYRTWKLGVHKEVAERYETKLCQGY.

The disordered stretch occupies residues 1-25 (MPRFRDLSHNCRPSEAPRVMEPKNR). [4Fe-4S] cluster is bound by residues cysteine 59, cysteine 67, cysteine 68, cysteine 71, cysteine 76, and cysteine 90. Positions 283, 317, 355, 470, 500, and 550 each coordinate [Ni-4Fe-4S] cluster.

In terms of assembly, tetramer of two alpha and two beta chains. [Ni-Fe-S] cluster serves as cofactor. It depends on [4Fe-4S] cluster as a cofactor.

It carries out the reaction CO + 2 oxidized [2Fe-2S]-[ferredoxin] + H2O = 2 reduced [2Fe-2S]-[ferredoxin] + CO2 + 2 H(+). Its function is as follows. The beta subunit (this protein) generates CO from CO(2), while the alpha subunit combines the CO with CoA and a methyl group to form acetyl-CoA. The methyl group, which is incorporated into acetyl-CoA, is transferred to the alpha subunit by a corrinoid iron-sulfur protein. The polypeptide is Carbon monoxide dehydrogenase/acetyl-CoA synthase subunit beta (Moorella thermoacetica (Clostridium thermoaceticum)).